Consider the following 295-residue polypeptide: Glycine--tRNA ligase alpha subunit (295 aa).

This sequence belongs to the class-II aminoacyl-tRNA synthetase family. In terms of assembly, tetramer of two alpha and two beta subunits.

It is found in the cytoplasm. It carries out the reaction tRNA(Gly) + glycine + ATP = glycyl-tRNA(Gly) + AMP + diphosphate. This chain is Glycine--tRNA ligase alpha subunit, found in Prochlorococcus marinus (strain MIT 9215).